The chain runs to 237 residues: DNA repair protein RecO (237 aa).

It belongs to the RecO family.

Involved in DNA repair and RecF pathway recombination. The sequence is that of DNA repair protein RecO from Cereibacter sphaeroides (strain ATCC 17025 / ATH 2.4.3) (Rhodobacter sphaeroides).